Here is a 115-residue protein sequence, read N- to C-terminus: MTRVKRGFIARRRRNKILTFASGFQGSHSKQFRVAKQQKKRALISAERDRMKRKRDFRRLWIARINAAVRFSGLSYSQFVYCMYKNRLSQNRKNLAQIATLCTPFFSTFSQKIMT.

It belongs to the bacterial ribosomal protein bL20 family.

The protein resides in the plastid. Its subcellular location is the chloroplast. Its function is as follows. Binds directly to 23S ribosomal RNA and is necessary for the in vitro assembly process of the 50S ribosomal subunit. It is not involved in the protein synthesizing functions of that subunit. The sequence is that of Large ribosomal subunit protein bL20c from Gnetum parvifolium (Small-leaved jointfir).